Reading from the N-terminus, the 340-residue chain is Eukaryotic translation initiation factor 3 subunit I (340 aa).

5 WD repeats span residues 8–47 (GHERSLNQIKFNRDGDLLFSVAKDKIVCAWWSANGERLGT), 50–91 (GHQG…KVWD), 150–189 (CTESKATVAGWSYLGKYIIAGHEDGSVSQYDGKTGEQLEN), 194–233 (EFDHQINDIQFSQDRTYFITASKDKSAKLISSRNLAILKT), and 291–330 (GHFGPLNTVDVHPNGTAYASGGEDGYVRVHHFDKPYFDFM).

It belongs to the eIF-3 subunit I family. Component of the eukaryotic translation initiation factor 3 (eIF-3) complex.

It localises to the cytoplasm. In terms of biological role, component of the eukaryotic translation initiation factor 3 (eIF-3) complex, which is involved in protein synthesis of a specialized repertoire of mRNAs and, together with other initiation factors, stimulates binding of mRNA and methionyl-tRNAi to the 40S ribosome. The eIF-3 complex specifically targets and initiates translation of a subset of mRNAs involved in cell proliferation. The chain is Eukaryotic translation initiation factor 3 subunit I (tif34) from Aspergillus fumigatus (strain CBS 144.89 / FGSC A1163 / CEA10) (Neosartorya fumigata).